The sequence spans 482 residues: Exodeoxyribonuclease 7 large subunit (482 aa).

The interval 457 to 482 (TLDTGGAPAKPASKPKQKPPEQGSLF) is disordered.

The protein belongs to the XseA family. As to quaternary structure, heterooligomer composed of large and small subunits.

The protein localises to the cytoplasm. It carries out the reaction Exonucleolytic cleavage in either 5'- to 3'- or 3'- to 5'-direction to yield nucleoside 5'-phosphates.. Bidirectionally degrades single-stranded DNA into large acid-insoluble oligonucleotides, which are then degraded further into small acid-soluble oligonucleotides. The chain is Exodeoxyribonuclease 7 large subunit from Ruegeria pomeroyi (strain ATCC 700808 / DSM 15171 / DSS-3) (Silicibacter pomeroyi).